Here is an 86-residue protein sequence, read N- to C-terminus: CRISPR-associated endoribonuclease Cas2 (86 aa).

Aspartate 8 is a Mg(2+) binding site.

This sequence belongs to the CRISPR-associated endoribonuclease Cas2 protein family. In terms of assembly, homodimer, forms a heterotetramer with a Cas1 homodimer. Mg(2+) serves as cofactor.

In terms of biological role, CRISPR (clustered regularly interspaced short palindromic repeat), is an adaptive immune system that provides protection against mobile genetic elements (viruses, transposable elements and conjugative plasmids). CRISPR clusters contain sequences complementary to antecedent mobile elements and target invading nucleic acids. CRISPR clusters are transcribed and processed into CRISPR RNA (crRNA). Functions as a ssRNA-specific endoribonuclease. Involved in the integration of spacer DNA into the CRISPR cassette. Plasmid targeted by CRISPR locus P1 transform wild-type cells very poorly. The sequence is that of CRISPR-associated endoribonuclease Cas2 from Haloferax volcanii (strain ATCC 29605 / DSM 3757 / JCM 8879 / NBRC 14742 / NCIMB 2012 / VKM B-1768 / DS2) (Halobacterium volcanii).